The primary structure comprises 383 residues: Acetylornithine deacetylase (383 aa).

His80 is a Zn(2+) binding site. Residue Asp82 is part of the active site. Zn(2+) is bound at residue Asp112. The active site involves Glu144. Positions 145, 169, and 355 each coordinate Zn(2+).

Belongs to the peptidase M20A family. ArgE subfamily. Homodimer. Requires Zn(2+) as cofactor. Co(2+) is required as a cofactor. Glutathione serves as cofactor.

It is found in the cytoplasm. The enzyme catalyses N(2)-acetyl-L-ornithine + H2O = L-ornithine + acetate. It participates in amino-acid biosynthesis; L-arginine biosynthesis; L-ornithine from N(2)-acetyl-L-ornithine (linear): step 1/1. Functionally, catalyzes the hydrolysis of the amide bond of N(2)-acetylated L-amino acids. Cleaves the acetyl group from N-acetyl-L-ornithine to form L-ornithine, an intermediate in L-arginine biosynthesis pathway, and a branchpoint in the synthesis of polyamines. The polypeptide is Acetylornithine deacetylase (Salmonella agona (strain SL483)).